Reading from the N-terminus, the 455-residue chain is Eukaryotic translation initiation factor 3 subunit E (455 aa).

Positions 256 to 425 constitute a PCI domain; it reads TDLFFSPAYI…GTVIMNHPPQ (170 aa).

It belongs to the eIF-3 subunit E family. In terms of assembly, component of the eukaryotic translation initiation factor 3 (eIF-3) complex.

It is found in the cytoplasm. In terms of biological role, component of the eukaryotic translation initiation factor 3 (eIF-3) complex, which is involved in protein synthesis of a specialized repertoire of mRNAs and, together with other initiation factors, stimulates binding of mRNA and methionyl-tRNAi to the 40S ribosome. The eIF-3 complex specifically targets and initiates translation of a subset of mRNAs involved in cell proliferation. The chain is Eukaryotic translation initiation factor 3 subunit E (int6) from Neosartorya fischeri (strain ATCC 1020 / DSM 3700 / CBS 544.65 / FGSC A1164 / JCM 1740 / NRRL 181 / WB 181) (Aspergillus fischerianus).